A 372-amino-acid polypeptide reads, in one-letter code: Lectin/endochitinase 1 (372 aa).

The N-terminal stretch at 1-23 (MMMRFLSAVVIMSSAMAVGLVSA) is a signal peptide. Gln24 serves as a coordination point for substrate. Gln24 is subject to Pyrrolidone carboxylic acid. 2 consecutive Chitin-binding type-1 domains span residues 24-64 (QRCG…KCWS) and 69-111 (DHRC…RCSS). Disulfide bonds link Cys26-Cys41, Cys35-Cys47, Cys40-Cys54, and Cys58-Cys62. 42 to 53 (SIWGWCGDSEPY) contributes to the substrate binding site. His70 serves as a coordination point for Zn(2+). Intrachain disulfides connect Cys72–Cys87, Cys81–Cys93, Cys86–Cys100, and Cys105–Cys109. His90 contributes to the Zn(2+) binding site. The interval 113 to 128 (VRGPRVALSGNSTANS) is spacer. Residue Asn123 is glycosylated (N-linked (GlcNAc...) asparagine). The chitinase stretch occupies residues 129–372 (IGNVVVTEPL…FQRIQMRVAA (244 aa)).

In terms of assembly, monomer and homodimer. Zinc favors dimerization. Active in the monomeric form but probably inactive in the dimeric form. The interaction with glycans on the mammalian TCR and MHC molecules of the T-cell and antigen-presenting cell, respectively, is inhibited by oligomers of GlcNAc. Post-translationally, proteolytically processed to yield a very small protein (8.5 kDa, 86 AA) containing only the two chitin-binding domains. In terms of tissue distribution, rhizomes and inflorescence with immature seeds.

The catalysed reaction is Random endo-hydrolysis of N-acetyl-beta-D-glucosaminide (1-&gt;4)-beta-linkages in chitin and chitodextrins.. Functionally, functions both as a chitinase and as a N-acetyl-D-glucosamine binding lectin. Inhibits the growth of several phytopathogenic chitin-containing fungi. Also possesses insecticidal activity and superantigenic properties. This is Lectin/endochitinase 1 (UDA1) from Urtica dioica (Great nettle).